A 617-amino-acid chain; its full sequence is Na(+)/H(+) antiporter NhaA 1 (617 aa).

The interval 1–433 is na(+)/H(+) antiporter NhaA; sequence MTVTEQTTAR…GWAIFRITDW (433 aa). Helical transmembrane passes span 33–53, 75–95, 113–133, 141–161, 171–191, 194–214, 234–254, 304–324, 340–360, 378–398, and 411–431; these read AAAL…SPWA, MTVK…IVGL, AVPV…FLAF, HAWG…LAII, LFLL…IAVF, DAIQ…LALV, VALY…ALLI, VGPA…AGVL, WGVV…ATWL, IAGG…IVDI, and IGVL…FRIT. Positions 434–617 constitute a Thioredoxin domain; sequence LSPPEPVGLK…LIRALEAGRR (184 aa).

It in the N-terminal section; belongs to the NhaA Na(+)/H(+) (TC 2.A.33) antiporter family.

The protein localises to the cell membrane. It catalyses the reaction Na(+)(in) + 2 H(+)(out) = Na(+)(out) + 2 H(+)(in). Functionally, na(+)/H(+) antiporter that extrudes sodium in exchange for external protons. This chain is Na(+)/H(+) antiporter NhaA 1, found in Mycolicibacterium vanbaalenii (strain DSM 7251 / JCM 13017 / BCRC 16820 / KCTC 9966 / NRRL B-24157 / PYR-1) (Mycobacterium vanbaalenii).